Here is a 276-residue protein sequence, read N- to C-terminus: RRP15-like protein (276 aa).

Disordered regions lie at residues 1–132 (MALL…QLRV) and 201–276 (KRAK…DGEE). Basic and acidic residues-rich tracts occupy residues 75 to 95 (FQKD…KADV) and 226 to 245 (KGSS…DFMT). A compositionally biased stretch (acidic residues) spans 254–276 (EEDDDEEGHNDEADDSDYDDGEE). Ser269 carries the post-translational modification Phosphoserine. Tyr271 carries the post-translational modification Phosphotyrosine.

This sequence belongs to the RRP15 family.

The protein is RRP15-like protein of Drosophila melanogaster (Fruit fly).